Consider the following 199-residue polypeptide: Peptidyl-prolyl cis-trans isomerase CYP22 (199 aa).

The region spanning 35–198 (FFDVSIGGIP…LAVVITECGE (164 aa)) is the PPIase cyclophilin-type domain.

Belongs to the cyclophilin-type PPIase family. In terms of tissue distribution, ubiquitous.

The catalysed reaction is [protein]-peptidylproline (omega=180) = [protein]-peptidylproline (omega=0). Functionally, PPIases accelerate the folding of proteins. It catalyzes the cis-trans isomerization of proline imidic peptide bonds in oligopeptides. The chain is Peptidyl-prolyl cis-trans isomerase CYP22 (CYP22) from Arabidopsis thaliana (Mouse-ear cress).